Here is a 552-residue protein sequence, read N- to C-terminus: Mothers against decapentaplegic homolog 4 (552 aa).

The mediates interaction with ZBTB7A stretch occupies residues 1-322; that stretch reads MDNMSITNTP…PISNHPAPEY (322 aa). Residues 18–142 enclose the MH1 domain; it reads SIVHSLMCHR…YERVVSPGID (125 aa). Position 37 is an N6-acetyllysine (K37). Positions 44–69 are required for interaction with TSC22D1; the sequence is VKKLKEKKDELDSLITAITTNGAHPS. Zn(2+) is bound at residue C71. K113 participates in a covalent cross-link: Glycyl lysine isopeptide (Lys-Gly) (interchain with G-Cter in SUMO2). Residues C115, C127, and H132 each coordinate Zn(2+). Residues 264–297 are disordered; it reads STTTWTGSRTAPYPPNLPHHQNGHLQHHPPMPPH. Residues 275-320 are SAD; that stretch reads PYPPNLPHHQNGHLQHHPPMPPHPGHYWPVHNELAFQPPISNHPAP. Positions 323-552 constitute an MH2 domain; that stretch reads WCSIAYFEMD…MPIADPQPLD (230 aa). 2 positions are modified to N6-acetyllysine: K428 and K507. K519 is covalently cross-linked (Glycyl lysine isopeptide (Lys-Gly) (interchain with G-Cter in ubiquitin)).

Belongs to the dwarfin/SMAD family. In terms of assembly, monomer; in the absence of TGF-beta activation. Heterotrimer; on TGF-beta activation. Heterotrimer composed of two molecules of a C-terminally phosphorylated R-SMAD molecule, SMAD2 or SMAD3, and one molecule of SMAD4 to form the transcriptional active SMAD2/SMAD3-SMAD4 complex. Found in a ternary complex composed of SMAD4, STK11/LKB1 and STK11IP. Found in a complex with SMAD1 and YY1. Identified in a complex that contains at least ZNF451, SMAD2, SMAD3 and SMAD4. Interacts with ATF2, COPS5, DACH1, MSG1, SKI, STK11/LKB1, STK11IP and TRIM33. Associates with ZNF423 or ZNF521 in response to BMP2 leading to activate transcription of BMP target genes. Interacts with USP9X. Interacts with RBPMS. Interacts with WWTR1 (via coiled-coil domain). Interacts with CITED1 and CITED2. Interacts with PDPK1 (via PH domain). Interacts with VPS39; this interaction affects heterodimer formation with SMAD3, but not with SMAD2, and leads to inhibition of SMAD3-dependent transcription activation. Interactions with VPS39 and SMAD2 may be mutually exclusive. Interacts (via MH2 domain) with ZNF451 (via N-terminal zinc-finger domains). Interacts with ZC3H3. Interacts weakly with ZNF8. Interacts with NUP93 and IPO7; translocates SMAD4 to the nucleus through the NPC upon BMP7 stimulation resulting in activation of SMAD4 signaling. Interacts with CREB3L1, the interaction takes place upon TGFB1 induction and SMAD4 acts as a CREB3L1 coactivator to induce the expression of genes involved in the assembly of collagen extracellular matrix. Interacts with DLX1. Interacts with ZBTB7A; the interaction is direct and stimulated by TGFB1. Interacts with CREBBP; the recruitment of this transcriptional coactivator is negatively regulated by ZBTB7A. Interacts with EP300; the interaction with this transcriptional coactivator is negatively regulated by ZBTB7A. Interacts with HDAC1. Interacts (via MH2 domain) with ZMIZ1 (via SP-RING-type domain); in the TGF-beta signaling pathway increases the activity of the SMAD3/SMAD4 transcriptional complex. Interacts (via N-terminus) with TSC22D1. Phosphorylated by PDPK1. In terms of processing, monoubiquitinated on Lys-519 by E3 ubiquitin-protein ligase TRIM33. Monoubiquitination hampers its ability to form a stable complex with activated SMAD2/3 resulting in inhibition of TGF-beta/BMP signaling cascade. Deubiquitination by USP9X restores its competence to mediate TGF-beta signaling.

Its subcellular location is the cytoplasm. It is found in the nucleus. Functionally, common SMAD (co-SMAD) is the coactivator and mediator of signal transduction by TGF-beta (transforming growth factor). Component of the heterotrimeric SMAD2/SMAD3-SMAD4 complex that forms in the nucleus and is required for the TGF-mediated signaling. Promotes binding of the SMAD2/SMAD4/FAST-1 complex to DNA and provides an activation function required for SMAD1 or SMAD2 to stimulate transcription. Component of the multimeric SMAD3/SMAD4/JUN/FOS complex which forms at the AP1 promoter site; required for synergistic transcriptional activity in response to TGF-beta. Acts synergistically with SMAD1 and YY1 in bone morphogenetic protein (BMP)-mediated cardiac-specific gene expression. Binds to SMAD binding elements (SBEs) (5'-GTCT/AGAC-3') within BMP response element (BMPRE) of cardiac activating regions. May act as a tumor suppressor. Positively regulates PDPK1 kinase activity by stimulating its dissociation from the 14-3-3 protein YWHAQ which acts as a negative regulator. In muscle physiology, plays a central role in the balance between atrophy and hypertrophy. When recruited by MSTN, promotes atrophy response via phosphorylated SMAD2/4. MSTN decrease causes SMAD4 release and subsequent recruitment by the BMP pathway to promote hypertrophy via phosphorylated SMAD1/5/8. The protein is Mothers against decapentaplegic homolog 4 (SMAD4) of Sus scrofa (Pig).